The chain runs to 828 residues: BEN domain-containing protein 3 (828 aa).

Lys-20 participates in a covalent cross-link: Glycyl lysine isopeptide (Lys-Gly) (interchain with G-Cter in SUMO); alternate. Lys-20 participates in a covalent cross-link: Glycyl lysine isopeptide (Lys-Gly) (interchain with G-Cter in SUMO1); alternate. Lys-20 is covalently cross-linked (Glycyl lysine isopeptide (Lys-Gly) (interchain with G-Cter in SUMO2); alternate). Residues Lys-41, Lys-56, Lys-58, Lys-73, Lys-128, Lys-129, Lys-137, Lys-142, and Lys-158 each participate in a glycyl lysine isopeptide (Lys-Gly) (interchain with G-Cter in SUMO2) cross-link. Residues 56–58 (KRK) carry the Nuclear localization signal motif. Phosphoserine is present on Ser-164. Residues 164–184 (SPSSLRLLNEPQKRDCGSTGA) are disordered. A Glycyl lysine isopeptide (Lys-Gly) (interchain with G-Cter in SUMO2) cross-link involves residue Lys-176. One can recognise a BEN 1 domain in the interval 242–343 (PPPEYQLTAA…DFFSRFWAQR (102 aa)). Residue Ser-379 is modified to Phosphoserine. The BEN 2 domain maps to 387–487 (ASDHVVDTQD…DELEGLGLDA (101 aa)). Residue Lys-427 forms a Glycyl lysine isopeptide (Lys-Gly) (interchain with G-Cter in SUMO2) linkage. Residues 483–504 (LGLDAGSEGDPPRDDCYDSSSL) form a disordered region. Ser-489 carries the post-translational modification Phosphoserine. Residue Lys-512 forms a Glycyl lysine isopeptide (Lys-Gly) (interchain with G-Cter in SUMO); alternate linkage. Residue Lys-512 forms a Glycyl lysine isopeptide (Lys-Gly) (interchain with G-Cter in SUMO2); alternate linkage. Residue Lys-528 forms a Glycyl lysine isopeptide (Lys-Gly) (interchain with G-Cter in SUMO2) linkage. Residues 548–650 (VPGADCLLSK…ERCRRRDTEQ (103 aa)) form the BEN 3 domain. A Glycyl lysine isopeptide (Lys-Gly) (interchain with G-Cter in SUMO2) cross-link involves residue Lys-700. Positions 715–816 (VPSPYLLSDK…ERCRRPNRKK (102 aa)) constitute a BEN 4 domain.

Homooligomer, probably a homooctamer. Interacts with HDAC2 and HDAC3, but not HDAC1. Interacts with SALL4. Interacts with SMARCA5/SNF2H, BAZ2A/TIP5 and USP21. Interacts with the nucleosome remodeling and histone deacetylase (NuRD) repressor complex. Interacts (via BEN domains 1 and 3) with ERCC6L (via N-terminal TPR repeat); the interaction is direct. Post-translationally, sumoylated at Lys-20 by SUMO1 and at Lys-512 by SUMO1, SUMO2 and SUMO3. Sumoylation probably occurs sequentially, with that of Lys-20 preceding that of Lys-512. It does not alter association with heterochromatin, but is required for the repression of transcription. In terms of tissue distribution, expressed at least in heart, kidney, liver, ovary and spleen, with highest levels in spleen and lowest in heart. Expressed on the surface of T-cells.

The protein localises to the nucleus. It is found in the nucleolus. Its function is as follows. Transcriptional repressor which associates with the NoRC (nucleolar remodeling complex) complex and plays a key role in repressing rDNA transcription. The sumoylated form modulates the stability of the NoRC complex component BAZ2A/TIP5 by controlling its USP21-mediated deubiquitination. Binds to unmethylated major satellite DNA and is involved in the recruitment of the Polycomb repressive complex 2 (PRC2) to major satellites. Stimulates the ERCC6L translocase and ATPase activities. The chain is BEN domain-containing protein 3 (BEND3) from Homo sapiens (Human).